A 180-amino-acid chain; its full sequence is Acireductone dioxygenase (180 aa).

Positions 97, 99, 103, and 141 each coordinate Fe(2+). Ni(2+) contacts are provided by His97, His99, Glu103, and His141.

The protein belongs to the acireductone dioxygenase (ARD) family. As to quaternary structure, monomer. The cofactor is Fe(2+). Ni(2+) is required as a cofactor.

It catalyses the reaction 1,2-dihydroxy-5-(methylsulfanyl)pent-1-en-3-one + O2 = 3-(methylsulfanyl)propanoate + CO + formate + 2 H(+). The catalysed reaction is 1,2-dihydroxy-5-(methylsulfanyl)pent-1-en-3-one + O2 = 4-methylsulfanyl-2-oxobutanoate + formate + 2 H(+). The protein operates within amino-acid biosynthesis; L-methionine biosynthesis via salvage pathway; L-methionine from S-methyl-5-thio-alpha-D-ribose 1-phosphate: step 5/6. Functionally, catalyzes 2 different reactions between oxygen and the acireductone 1,2-dihydroxy-3-keto-5-methylthiopentene (DHK-MTPene) depending upon the metal bound in the active site. Fe-containing acireductone dioxygenase (Fe-ARD) produces formate and 2-keto-4-methylthiobutyrate (KMTB), the alpha-ketoacid precursor of methionine in the methionine recycle pathway. Ni-containing acireductone dioxygenase (Ni-ARD) produces methylthiopropionate, carbon monoxide and formate, and does not lie on the methionine recycle pathway. This chain is Acireductone dioxygenase, found in Yersinia pseudotuberculosis serotype O:1b (strain IP 31758).